The primary structure comprises 417 residues: NADH-quinone oxidoreductase subunit D (417 aa).

Belongs to the complex I 49 kDa subunit family. NDH-1 is composed of 14 different subunits. Subunits NuoB, C, D, E, F, and G constitute the peripheral sector of the complex.

It is found in the cell inner membrane. It catalyses the reaction a quinone + NADH + 5 H(+)(in) = a quinol + NAD(+) + 4 H(+)(out). Its function is as follows. NDH-1 shuttles electrons from NADH, via FMN and iron-sulfur (Fe-S) centers, to quinones in the respiratory chain. The immediate electron acceptor for the enzyme in this species is believed to be ubiquinone. Couples the redox reaction to proton translocation (for every two electrons transferred, four hydrogen ions are translocated across the cytoplasmic membrane), and thus conserves the redox energy in a proton gradient. In Nitrosomonas europaea (strain ATCC 19718 / CIP 103999 / KCTC 2705 / NBRC 14298), this protein is NADH-quinone oxidoreductase subunit D.